Consider the following 575-residue polypeptide: Sorting nexin-41 (575 aa).

The disordered stretch occupies residues 30–66; that stretch reads TDGPDDYDFTEPSINGSSDENAQSNAVAEPIEETDEP. Polar residues predominate over residues 41–55; that stretch reads PSINGSSDENAQSNA. Residues 101-221 enclose the PX domain; sequence QGKNPEVIRI…QKFLNPEYFW (121 aa). The a 1,2-diacyl-sn-glycero-3-phospho-(1D-myo-inositol-3-phosphate) site is built by R139, S141, K165, and R188. Residues 467 to 486 are disordered; the sequence is FRSSASPNNKSGSDSISSEV. Positions 469–484 are enriched in polar residues; sequence SSASPNNKSGSDSISS.

The protein belongs to the sorting nexin family.

The protein resides in the endosome membrane. The protein localises to the endomembrane system. In terms of biological role, may be required for cytoplasm to vacuole transport (Cvt) and pexophagy. The polypeptide is Sorting nexin-41 (SNX41) (Kluyveromyces lactis (strain ATCC 8585 / CBS 2359 / DSM 70799 / NBRC 1267 / NRRL Y-1140 / WM37) (Yeast)).